The sequence spans 296 residues: Enoyl-CoA hydratase ACTT3 (296 aa).

The Peroxisomal targeting signal type 1 motif lies at 294 to 296; the sequence is PKL.

Belongs to the enoyl-CoA hydratase/isomerase family.

The protein localises to the peroxisome. It carries out the reaction a (3S)-3-hydroxyacyl-CoA = a (2E)-enoyl-CoA + H2O. The enzyme catalyses a 4-saturated-(3S)-3-hydroxyacyl-CoA = a (3E)-enoyl-CoA + H2O. Its pathway is mycotoxin biosynthesis. Enoyl-CoA hydratase; part of the gene clusters that mediate the biosynthesis of the host-selective toxins (HSTs) ACT-toxins responsible for brown spot of tangerine disease by the tangerine pathotype which affects tangerines and mandarins. ACT-toxins consist of three moieties, 9,10-epoxy-8-hydroxy-9-methyl-decatrienoic acid (EDA), valine and a polyketide. ACT-toxin I is toxic to both citrus and pear; toxin II the 5''-deoxy derivative of ACT-toxin I, is highly toxic to pear and slightly toxic to citrus. On cellular level, ACT-toxins affect plasma membrane of susceptible cells and cause a sudden increase in loss of K(+) after a few minutes of toxin treatment. The acyl-CoA ligase ACTT1, the hydrolase ACTT2, the enoyl-CoA hydratases ACTT3 and ACTT6, and the acyl-CoA synthetase ACTT5 are all involved in the biosynthesis of the AK-, AF- and ACT-toxin common 9,10-epoxy-8-hydroxy-9-methyl-decatrienoic acid (EDA) structural moiety. The exact role of each enzyme, and of additional enzymes identified within the AF-toxin clusters have still to be determined. On the other hand, ACTTS1 to ACTTS4 are specific to the tangerine pathotype. The function of ACTTS3 is to elongate the polyketide chain portion of ACT-toxin that is unique to this toxin. The enoyl-reductase ACTTS2 might complement the missing enoyl-reductase (ER) domain in ACTTS3 in the synthesis of the polyketide portion of ACT-toxin. The roles of the nonribosomal peptide synthetases-related proteins ACTTS1 and ACTTS4 have also still not been elucidated. The protein is Enoyl-CoA hydratase ACTT3 of Alternaria alternata (Alternaria rot fungus).